The sequence spans 240 residues: Large ribosomal subunit protein uL2 (240 aa).

Over residues 1–11 (MGKRLISQNRG) the composition is skewed to polar residues. Disordered regions lie at residues 1-25 (MGKR…HKRK) and 207-240 (GGRH…TGKR). Composition is skewed to basic residues over residues 13–25 (GTPK…HKRK) and 224–240 (SPGR…TGKR).

The protein belongs to the universal ribosomal protein uL2 family. In terms of assembly, part of the 50S ribosomal subunit. Forms a bridge to the 30S subunit in the 70S ribosome.

Its function is as follows. One of the primary rRNA binding proteins. Required for association of the 30S and 50S subunits to form the 70S ribosome, for tRNA binding and peptide bond formation. It has been suggested to have peptidyltransferase activity; this is somewhat controversial. Makes several contacts with the 16S rRNA in the 70S ribosome. This chain is Large ribosomal subunit protein uL2, found in Methanococcus maripaludis (strain DSM 14266 / JCM 13030 / NBRC 101832 / S2 / LL).